Reading from the N-terminus, the 774-residue chain is 1,4-alpha-glucan branching enzyme GlgB 1 (774 aa).

The interval 1-66 (MTPRPSSSGP…AEVAVSPAPD (66 aa)) is disordered. Residues 29–40 (KPAKAAKKKAPR) show a composition bias toward basic residues. Over residues 41–55 (RTTASANASATTSVS) the composition is skewed to low complexity. Asp457 functions as the Nucleophile in the catalytic mechanism. Glu510 acts as the Proton donor in catalysis. The segment at 748 to 774 (YGGGDVVNPDPVKPEPQGGTAARRASG) is disordered.

This sequence belongs to the glycosyl hydrolase 13 family. GlgB subfamily. Monomer.

It catalyses the reaction Transfers a segment of a (1-&gt;4)-alpha-D-glucan chain to a primary hydroxy group in a similar glucan chain.. It functions in the pathway glycan biosynthesis; glycogen biosynthesis. In terms of biological role, catalyzes the formation of the alpha-1,6-glucosidic linkages in glycogen by scission of a 1,4-alpha-linked oligosaccharide from growing alpha-1,4-glucan chains and the subsequent attachment of the oligosaccharide to the alpha-1,6 position. This Streptomyces coelicolor (strain ATCC BAA-471 / A3(2) / M145) protein is 1,4-alpha-glucan branching enzyme GlgB 1 (glgB1).